Consider the following 347-residue polypeptide: Glycerol-1-phosphate dehydrogenase [NAD(P)+] (347 aa).

NAD(+)-binding positions include 94–98 (GKVID) and 116–119 (TAAS). D121 contributes to the substrate binding site. An NAD(+)-binding site is contributed by S125. D168 lines the substrate pocket. Residues D168 and H248 each coordinate Zn(2+). H252 serves as a coordination point for substrate. A Zn(2+)-binding site is contributed by H264.

The protein belongs to the glycerol-1-phosphate dehydrogenase family. Homooctamer. Zn(2+) serves as cofactor.

It localises to the cytoplasm. The catalysed reaction is sn-glycerol 1-phosphate + NAD(+) = dihydroxyacetone phosphate + NADH + H(+). It catalyses the reaction sn-glycerol 1-phosphate + NADP(+) = dihydroxyacetone phosphate + NADPH + H(+). It functions in the pathway membrane lipid metabolism; glycerophospholipid metabolism. Its activity is regulated as follows. Partially inhibited by divalent metal cations such as Co(2+), Cu(2+) and Ni(2+). Catalyzes the NAD(P)H-dependent reduction of dihydroxyacetonephosphate (DHAP or glycerone phosphate) to glycerol 1-phosphate (G1P). The G1P thus generated is used as the glycerophosphate backbone of phospholipids in the cellular membranes of Archaea. Is also able to catalyze the reverse reaction, i.e. the NAD(P)(+)-dependent oxidation of G1P but not of G3P. Is not active toward glycerol, dihydroxyacetone, glyceraldehyde-3-phosphate, glyceraldehyde and glycerol-2-phosphate. This chain is Glycerol-1-phosphate dehydrogenase [NAD(P)+] (egsA), found in Methanothermobacter thermautotrophicus (strain ATCC 29096 / DSM 1053 / JCM 10044 / NBRC 100330 / Delta H) (Methanobacterium thermoautotrophicum).